The primary structure comprises 88 residues: Large ribosomal subunit protein bL31B (88 aa).

This sequence belongs to the bacterial ribosomal protein bL31 family. Type B subfamily. As to quaternary structure, part of the 50S ribosomal subunit.

This chain is Large ribosomal subunit protein bL31B, found in Nocardia farcinica (strain IFM 10152).